A 250-amino-acid polypeptide reads, in one-letter code: MCDQQKQPQFPPSCVKGSGLGAGQGSNGASVKCPVPCQTQTVCVTGPAPCPTQTYVKYQVPCQTQTYVKCPAPCQRTYVKYPTPCQTYVKCPAPCQTTYVKCPTPCQTYVKCPAPCQMTYIKSPAPCQTQTCYVQGASPCQSYYVQAPASGSTSQYCVTDPCSAPCSTSYCCLAPRTFGVSPLRRWIQRPQNCNTGSSGCCENSGSSGCCGSGGCGCSCGCGSSGCCCLGIIPMRSRGPACCDHEDDCCC.

In terms of tissue distribution, skin-specific.

The protein is Protein KPLCE of Homo sapiens (Human).